A 549-amino-acid polypeptide reads, in one-letter code: GPI mannosyltransferase 3 (549 aa).

Residues 1-39 (MAYNNSVRKRKKDIQDANGFHRDQTIDKKSRATNKLEES) lie on the Cytoplasmic side of the membrane. A helical membrane pass occupies residues 40 to 60 (LPTFKVFIVLFFIRLLNSLTI). The Lumenal segment spans residues 61-119 (KTFFQADEYYQCLEPAYNFVFGSGYITWEWEEGIRSSIHPLIYALGYKMVSYVHFDDKP). A helical transmembrane segment spans residues 120–140 (IILIPKVIGALIASIGEVYLY). The Cytoplasmic segment spans residues 141–154 (KFSKKFTKNEKLAR). Residues 155-175 (LTLILSLLSPFNWYIITRSFS) traverse the membrane as a helical segment. Residues 176 to 205 (NSFEMVLTTIAFTYWPWDNVISYKDISMSC) lie on the Lumenal side of the membrane. The helical transmembrane segment at 206-226 (IIAFISCIVRPTNGIIWLYLG) threads the bilayer. Topologically, residues 227–246 (INFMIKNYKLEKQSGKLMKL) are cytoplasmic. Residues 247–267 (ILILSIELILILLVNTGLDYI) traverse the membrane as a helical segment. Over 268-289 (FYGKTTFPLYNFVEFNVIRNLS) the chain is Lumenal. Residue asparagine 287 is glycosylated (N-linked (GlcNAc...) asparagine). A helical transmembrane segment spans residues 290–310 (IFYGVAPWHFYLFQGVPIILM). Over 311-328 (TYLPWLLHSAIVLKKYKS) the chain is Cytoplasmic. A helical transmembrane segment spans residues 329-349 (LLGQVAILMIGGFSLIDHKEI). A topological domain (lumenal) is located at residue arginine 350. Residues 351 to 367 (FIYPLQPIFMLMVAYSI) traverse the membrane as a helical segment. The Cytoplasmic portion of the chain corresponds to 368 to 379 (HETKHKFQRLYK). A helical transmembrane segment spans residues 380–400 (FLVPVIIILNLIIAIFFTQVH). The Lumenal portion of the chain corresponds to 401–549 (ERGVIDIVQY…KGDIIVYCQI (149 aa)). A glycan (N-linked (GlcNAc...) asparagine) is linked at asparagine 442.

This sequence belongs to the glycosyltransferase 22 family. PIGB subfamily.

The protein localises to the endoplasmic reticulum membrane. The protein operates within glycolipid biosynthesis; glycosylphosphatidylinositol-anchor biosynthesis. Functionally, mannosyltransferase involved in glycosylphosphatidylinositol-anchor biosynthesis. Transfers the third mannose to Man2-GlcN-acyl-PI during GPI precursor assembly. The sequence is that of GPI mannosyltransferase 3 (GPI10) from Debaryomyces hansenii (strain ATCC 36239 / CBS 767 / BCRC 21394 / JCM 1990 / NBRC 0083 / IGC 2968) (Yeast).